We begin with the raw amino-acid sequence, 141 residues long: Nucleoside diphosphate kinase (141 aa).

Positions 11, 59, 87, 93, 104, and 114 each coordinate ATP. The Pros-phosphohistidine intermediate role is filled by H117.

It belongs to the NDK family. Homotetramer. The cofactor is Mg(2+).

Its subcellular location is the cytoplasm. The catalysed reaction is a 2'-deoxyribonucleoside 5'-diphosphate + ATP = a 2'-deoxyribonucleoside 5'-triphosphate + ADP. It carries out the reaction a ribonucleoside 5'-diphosphate + ATP = a ribonucleoside 5'-triphosphate + ADP. Major role in the synthesis of nucleoside triphosphates other than ATP. The ATP gamma phosphate is transferred to the NDP beta phosphate via a ping-pong mechanism, using a phosphorylated active-site intermediate. The sequence is that of Nucleoside diphosphate kinase from Burkholderia ambifaria (strain MC40-6).